A 424-amino-acid polypeptide reads, in one-letter code: 3-ketoacyl-CoA thiolase B, peroxisomal (424 aa).

The N-terminal 26 residues, 1-26 (MHRLQVVLGHLAGRPESSSALQAAPC), are a transit peptide targeting the peroxisome. Residues 1 to 26 (MHRLQVVLGHLAGRPESSSALQAAPC) form a PTS2-type peroxisomal targeting signal region. Catalysis depends on C123, which acts as the Acyl-thioester intermediate. N6-acetyllysine is present on residues K173 and K234. Residues R249, T252, and S276 each contribute to the CoA site. C408 serves as the catalytic Proton donor/acceptor.

This sequence belongs to the thiolase-like superfamily. Thiolase family. Homodimer. Interacts (via PTS2-type peroxisomal targeting signal region) with PEX7; leading to its translocation into peroxisomes. As to expression, mainly expressed in liver; weaker levels in kidney, intestine and white adipose tissue.

The protein localises to the peroxisome. It carries out the reaction an acyl-CoA + acetyl-CoA = a 3-oxoacyl-CoA + CoA. The enzyme catalyses 2 acetyl-CoA = acetoacetyl-CoA + CoA. The catalysed reaction is hexanoyl-CoA + acetyl-CoA = 3-oxooctanoyl-CoA + CoA. It catalyses the reaction tetradecanoyl-CoA + acetyl-CoA = 3-oxohexadecanoyl-CoA + CoA. It carries out the reaction 3-oxohexadecanedioyl-CoA + CoA = tetradecanedioyl-CoA + acetyl-CoA. The enzyme catalyses 3-oxo-(6Z,9Z,12Z,15Z,18Z,21Z)-tetracosahexaenoyl-CoA + CoA = (4Z,7Z,10Z,13Z,16Z,19Z)-docosahexaenoyl-CoA + acetyl-CoA. Its pathway is lipid metabolism; peroxisomal fatty acid beta-oxidation. In terms of biological role, responsible for the thiolytic cleavage of straight chain 3-keto fatty acyl-CoAs (3-oxoacyl-CoAs). Plays an important role in fatty acid peroxisomal beta-oxidation. Catalyzes the cleavage of short, medium, long, and very long straight chain 3-oxoacyl-CoAs. This Mus musculus (Mouse) protein is 3-ketoacyl-CoA thiolase B, peroxisomal.